A 166-amino-acid polypeptide reads, in one-letter code: Regulatory protein RecX (166 aa).

Belongs to the RecX family.

It localises to the cytoplasm. Modulates RecA activity. This Salmonella agona (strain SL483) protein is Regulatory protein RecX.